The primary structure comprises 402 residues: Type II NADH:quinone oxidoreductase (402 aa).

FAD contacts are provided by residues 12–16 (GAGYA), 39–40 (NK), and Val-83. Glu-172 is a catalytic residue. FAD-binding positions include Asp-302, 319–320 (AQ), and Lys-379.

The protein belongs to the NADH dehydrogenase family. Requires FAD as cofactor.

The protein localises to the cell membrane. It catalyses the reaction a quinone + NADH + H(+) = a quinol + NAD(+). Functionally, alternative, nonproton pumping NADH:quinone oxidoreductase that delivers electrons to the respiratory chain by oxidation of NADH and reduction of quinones, and contributes to the regeneration of NAD(+). This chain is Type II NADH:quinone oxidoreductase, found in Staphylococcus aureus (strain MSSA476).